The chain runs to 78 residues: Large ribosomal subunit protein bL28 (78 aa).

It belongs to the bacterial ribosomal protein bL28 family.

This Pasteurella multocida (strain Pm70) protein is Large ribosomal subunit protein bL28.